A 546-amino-acid chain; its full sequence is CTP synthase (546 aa).

Residues 1 to 266 (MTTNYIFVTG…DDLVCTRFGI (266 aa)) are amidoligase domain. Ser14 contributes to the CTP binding site. Residue Ser14 coordinates UTP. Residues 15–20 (SLGKGI) and Asp72 each bind ATP. Asp72 and Glu140 together coordinate Mg(2+). CTP contacts are provided by residues 147 to 149 (DIE), 187 to 192 (KTKPTQ), and Lys223. Residues 187–192 (KTKPTQ) and Lys223 contribute to the UTP site. Residue 239-241 (KDV) coordinates ATP. The 252-residue stretch at 291–542 (TIGMVGKYIE…VKAAGQYSRG (252 aa)) folds into the Glutamine amidotransferase type-1 domain. Gly352 is a binding site for L-glutamine. The active-site Nucleophile; for glutamine hydrolysis is Cys379. L-glutamine is bound by residues 380–383 (LGMQ), Glu403, and Arg470. Catalysis depends on residues His515 and Glu517.

This sequence belongs to the CTP synthase family. Homotetramer.

The enzyme catalyses UTP + L-glutamine + ATP + H2O = CTP + L-glutamate + ADP + phosphate + 2 H(+). The catalysed reaction is L-glutamine + H2O = L-glutamate + NH4(+). It catalyses the reaction UTP + NH4(+) + ATP = CTP + ADP + phosphate + 2 H(+). The protein operates within pyrimidine metabolism; CTP biosynthesis via de novo pathway; CTP from UDP: step 2/2. Allosterically activated by GTP, when glutamine is the substrate; GTP has no effect on the reaction when ammonia is the substrate. The allosteric effector GTP functions by stabilizing the protein conformation that binds the tetrahedral intermediate(s) formed during glutamine hydrolysis. Inhibited by the product CTP, via allosteric rather than competitive inhibition. Catalyzes the ATP-dependent amination of UTP to CTP with either L-glutamine or ammonia as the source of nitrogen. Regulates intracellular CTP levels through interactions with the four ribonucleotide triphosphates. This is CTP synthase from Vibrio parahaemolyticus serotype O3:K6 (strain RIMD 2210633).